The chain runs to 101 residues: Urease subunit beta (101 aa).

Belongs to the urease beta subunit family. Heterotrimer of UreA (gamma), UreB (beta) and UreC (alpha) subunits. Three heterotrimers associate to form the active enzyme.

The protein localises to the cytoplasm. The catalysed reaction is urea + 2 H2O + H(+) = hydrogencarbonate + 2 NH4(+). The protein operates within nitrogen metabolism; urea degradation; CO(2) and NH(3) from urea (urease route): step 1/1. The chain is Urease subunit beta from Rhizobium etli (strain CIAT 652).